We begin with the raw amino-acid sequence, 557 residues long: DNA ligase B (557 aa).

The active-site N6-AMP-lysine intermediate is the Lys125.

Belongs to the NAD-dependent DNA ligase family. LigB subfamily.

It carries out the reaction NAD(+) + (deoxyribonucleotide)n-3'-hydroxyl + 5'-phospho-(deoxyribonucleotide)m = (deoxyribonucleotide)n+m + AMP + beta-nicotinamide D-nucleotide.. Its function is as follows. Catalyzes the formation of phosphodiester linkages between 5'-phosphoryl and 3'-hydroxyl groups in double-stranded DNA using NAD as a coenzyme and as the energy source for the reaction. The sequence is that of DNA ligase B from Pseudomonas entomophila (strain L48).